The following is a 464-amino-acid chain: Soluble pyridine nucleotide transhydrogenase (464 aa).

35–44 (DSRRVVGGNC) serves as a coordination point for FAD.

The protein belongs to the class-I pyridine nucleotide-disulfide oxidoreductase family. It depends on FAD as a cofactor.

It localises to the cytoplasm. The enzyme catalyses NAD(+) + NADPH = NADH + NADP(+). In terms of biological role, conversion of NADPH, generated by peripheral catabolic pathways, to NADH, which can enter the respiratory chain for energy generation. In Pseudomonas paraeruginosa (strain DSM 24068 / PA7) (Pseudomonas aeruginosa (strain PA7)), this protein is Soluble pyridine nucleotide transhydrogenase.